The chain runs to 565 residues: Thiol:disulfide interchange protein DsbD (565 aa).

An N-terminal signal peptide occupies residues 1–19 (MAQRIFTLILLLCSTSVFA). Intrachain disulfides connect Cys-122–Cys-128 and Cys-182–Cys-304. A run of 7 helical transmembrane segments spans residues 163–183 (LPFS…TPCV), 208–228 (LLTF…GLVV), 243–263 (YVLI…FGLF), 296–316 (IAGL…LLYI), 323–343 (WLGG…LMLI), 357–377 (WMEQ…VFLL), and 384–404 (VWGL…AFIT). In terms of domain architecture, Thioredoxin spans 434 to 565 (WAFGATHTAQ…FSAHLRDRQP (132 aa)). Cys-480 and Cys-483 are disulfide-bonded.

The protein belongs to the thioredoxin family. DsbD subfamily.

It is found in the cell inner membrane. The catalysed reaction is [protein]-dithiol + NAD(+) = [protein]-disulfide + NADH + H(+). The enzyme catalyses [protein]-dithiol + NADP(+) = [protein]-disulfide + NADPH + H(+). Functionally, required to facilitate the formation of correct disulfide bonds in some periplasmic proteins and for the assembly of the periplasmic c-type cytochromes. Acts by transferring electrons from cytoplasmic thioredoxin to the periplasm. This transfer involves a cascade of disulfide bond formation and reduction steps. This is Thiol:disulfide interchange protein DsbD from Shigella boydii serotype 4 (strain Sb227).